The following is a 287-amino-acid chain: MDSSMSTKKKTKLSVRNQTCFKKSSLSSSSTAKKTTNLSMREQTMFKKALELSTLCNIDVCVIYYGRDGKLIKTWPEDQSKVRDMAERFSRLHERERCKKRTNLSLFLRKKILDDTKLSEKVLEMEDSLESGLRVLQDKLLLLQPEKNQTEFGQTRAVSSTTNPLSPPPSLIEDHRHQQWTEPLMSGVSNTEQDLSTSSLSQNQSRISVFLYNHDNRSFYQVPDSVSSFDQSALLGEQGSGLGSNFDLPPMVFPPQMQTQTPLVPFDQFAAWNQAPSFADPMMFPYN.

In terms of domain architecture, MADS-box spans 30 to 78; that stretch reads STAKKTTNLSMREQTMFKKALELSTLCNIDVCVIYYGRDGKLIKTWPED. Residues 151–171 are disordered; sequence EFGQTRAVSSTTNPLSPPPSL.

Interacts with MEE14/CBP1.

The protein localises to the nucleus. In terms of biological role, probable transcription factor that may function in the maintenance of the proper function of the central cell in pollen tube attraction. This chain is Agamous-like MADS-box protein AGL53, found in Arabidopsis thaliana (Mouse-ear cress).